The sequence spans 230 residues: Ureidoacrylate amidohydrolase RutB (230 aa).

D24 acts as the Proton acceptor in catalysis. K133 is a catalytic residue. C166 functions as the Nucleophile in the catalytic mechanism.

It belongs to the isochorismatase family. RutB subfamily.

It catalyses the reaction (Z)-3-ureidoacrylate + H2O + H(+) = (Z)-3-aminoacrylate + NH4(+) + CO2. It carries out the reaction (Z)-3-ureidoacrylate + H2O = (Z)-3-aminoacrylate + carbamate + H(+). The catalysed reaction is (Z)-2-methylureidoacrylate + H2O + H(+) = (Z)-2-methylaminoacrylate + NH4(+) + CO2. Functionally, hydrolyzes ureidoacrylate to form aminoacrylate and carbamate. The carbamate hydrolyzes spontaneously, thereby releasing one of the nitrogen atoms of the pyrimidine ring as ammonia and one of its carbon atoms as CO2. This Escherichia coli O7:K1 (strain IAI39 / ExPEC) protein is Ureidoacrylate amidohydrolase RutB.